The following is an 872-amino-acid chain: Alanine--tRNA ligase (872 aa).

Residues histidine 567, histidine 571, cysteine 669, and histidine 673 each contribute to the Zn(2+) site.

Belongs to the class-II aminoacyl-tRNA synthetase family. It depends on Zn(2+) as a cofactor.

The protein localises to the cytoplasm. It catalyses the reaction tRNA(Ala) + L-alanine + ATP = L-alanyl-tRNA(Ala) + AMP + diphosphate. Functionally, catalyzes the attachment of alanine to tRNA(Ala) in a two-step reaction: alanine is first activated by ATP to form Ala-AMP and then transferred to the acceptor end of tRNA(Ala). Also edits incorrectly charged Ser-tRNA(Ala) and Gly-tRNA(Ala) via its editing domain. The sequence is that of Alanine--tRNA ligase from Streptococcus pyogenes serotype M18 (strain MGAS8232).